We begin with the raw amino-acid sequence, 478 residues long: Protein MAINTENANCE OF MERISTEMS (478 aa).

Residues 459-478 (ASTTNKRKRREEQQQTDWSE) form a disordered region. Residues 464 to 468 (KRKRR) carry the Nuclear localization signal motif.

As to expression, expressed in root meristem, root vasculature, shoot apical meristem (SAM), leaf vasculature and ovules.

It localises to the nucleus. Its function is as follows. Required for the organization of the root apical meristem (RAM) and the shoot apical meristem (SAM). Required to maintain genome stability and cell division activity in meristematic cells. This chain is Protein MAINTENANCE OF MERISTEMS, found in Arabidopsis thaliana (Mouse-ear cress).